A 1187-amino-acid chain; its full sequence is BAI1-associated protein 3 (1187 aa).

The tract at residues 55-81 (SFRRRTEQDPGSASADPQEPATGAWKP) is disordered. Residues 176–335 (SLEEHTEAIE…VKSARANGTA (160 aa)) form the C2 1 domain. Positions 211, 217, 295, and 297 each coordinate Ca(2+). An MHD1 domain is found at 663–784 (FELYLTLADL…EATLFYTELL (122 aa)). Positions 888-996 (DEAVAPLMKY…CSTRECIEQF (109 aa)) constitute an MHD2 domain. One can recognise a C2 2 domain in the interval 1010 to 1136 (RFGRLSVRCH…GVARPQVGGG (127 aa)). The Ca(2+) site is built by Leu-1040, Asp-1041, Asp-1047, Asp-1105, Asp-1107, Ser-1110, and Asp-1113.

The protein belongs to the unc-13 family. In terms of assembly, interacts with ADGRB1; this interaction is direct. Interacts with endosomal SNARE proteins VAMP3, VAMP4, STX6 and STX16; this interaction is increased in the presence of calcium. Ca(2+) is required as a cofactor. In terms of tissue distribution, predominantly expressed in brain. Also expressed in nonneural tissues such as breast and testes epithelium.

The protein resides in the cytoplasm. It localises to the cytosol. It is found in the recycling endosome membrane. Its subcellular location is the late endosome membrane. The protein localises to the golgi apparatus. The protein resides in the trans-Golgi network membrane. It localises to the cell membrane. Its function is as follows. Functions in endosome to Golgi retrograde transport. In response to calcium influx, may interact with SNARE fusion receptors and membrane phospholipids to mediate endosome fusion with the trans-Golgi network. By promoting the recycling of secretory vesicle transmembrane proteins, it indirectly controls dense-core secretory vesicle biogenesis, maturation and their ability to mediate the constitutive and regulated secretion of neurotransmitters and hormones. May regulate behavior and food intake by controlling calcium-stimulated exocytosis of neurotransmitters including NPY and serotonin and hormones like insulin. Proposed to play a role in hypothalamic neuronal firing by modulating gamma-aminobutyric acid (GABA)ergic inhibitory neurotransmission. The protein is BAI1-associated protein 3 of Homo sapiens (Human).